A 635-amino-acid polypeptide reads, in one-letter code: Threonine--tRNA ligase (635 aa).

The TGS domain maps to 1–61; sequence MVSIRLPDGS…DHDVALAIVT (61 aa). The catalytic stretch occupies residues 242–533; the sequence is DHRKLGKQLD…LIEHHAGAMP (292 aa). The Zn(2+) site is built by cysteine 333, histidine 384, and histidine 510.

Belongs to the class-II aminoacyl-tRNA synthetase family. In terms of assembly, homodimer. Requires Zn(2+) as cofactor.

It is found in the cytoplasm. The enzyme catalyses tRNA(Thr) + L-threonine + ATP = L-threonyl-tRNA(Thr) + AMP + diphosphate + H(+). Its function is as follows. Catalyzes the attachment of threonine to tRNA(Thr) in a two-step reaction: L-threonine is first activated by ATP to form Thr-AMP and then transferred to the acceptor end of tRNA(Thr). Also edits incorrectly charged L-seryl-tRNA(Thr). The protein is Threonine--tRNA ligase of Paraburkholderia xenovorans (strain LB400).